The primary structure comprises 226 residues: Phosphoribosylformylglycinamidine synthase subunit PurQ (226 aa).

One can recognise a Glutamine amidotransferase type-1 domain in the interval 3–226 (RVAVIRFPGT…FESLVEWCRS (224 aa)). Cys86 acts as the Nucleophile in catalysis. Catalysis depends on residues His199 and Glu201.

As to quaternary structure, part of the FGAM synthase complex composed of 1 PurL, 1 PurQ and 2 PurS subunits.

The protein localises to the cytoplasm. The enzyme catalyses N(2)-formyl-N(1)-(5-phospho-beta-D-ribosyl)glycinamide + L-glutamine + ATP + H2O = 2-formamido-N(1)-(5-O-phospho-beta-D-ribosyl)acetamidine + L-glutamate + ADP + phosphate + H(+). It catalyses the reaction L-glutamine + H2O = L-glutamate + NH4(+). Its pathway is purine metabolism; IMP biosynthesis via de novo pathway; 5-amino-1-(5-phospho-D-ribosyl)imidazole from N(2)-formyl-N(1)-(5-phospho-D-ribosyl)glycinamide: step 1/2. Its function is as follows. Part of the phosphoribosylformylglycinamidine synthase complex involved in the purines biosynthetic pathway. Catalyzes the ATP-dependent conversion of formylglycinamide ribonucleotide (FGAR) and glutamine to yield formylglycinamidine ribonucleotide (FGAM) and glutamate. The FGAM synthase complex is composed of three subunits. PurQ produces an ammonia molecule by converting glutamine to glutamate. PurL transfers the ammonia molecule to FGAR to form FGAM in an ATP-dependent manner. PurS interacts with PurQ and PurL and is thought to assist in the transfer of the ammonia molecule from PurQ to PurL. This Methanopyrus kandleri (strain AV19 / DSM 6324 / JCM 9639 / NBRC 100938) protein is Phosphoribosylformylglycinamidine synthase subunit PurQ.